The chain runs to 362 residues: Stress response regulator protein 1 (362 aa).

Disordered stretches follow at residues 1–39 (MTRL…SLVQ) and 163–188 (TLKS…ETKT). Over residues 19-39 (PSQLLHSASLSSSPSSPSLVQ) the composition is skewed to low complexity. The region spanning 209–327 (KFLLVDDNLI…LDFMANVIDE (119 aa)) is the Response regulatory domain. A 4-aspartylphosphate modification is found at Asp260.

Its function is as follows. Required for stress adaptation, morphogenesis and virulence. The polypeptide is Stress response regulator protein 1 (SRR1) (Lodderomyces elongisporus (strain ATCC 11503 / CBS 2605 / JCM 1781 / NBRC 1676 / NRRL YB-4239) (Yeast)).